We begin with the raw amino-acid sequence, 159 residues long: Transcription elongation factor GreA (159 aa).

Positions 14–76 (VKKLEEELEY…QLENMLRNAN (63 aa)) form a coiled coil.

The protein belongs to the GreA/GreB family.

In terms of biological role, necessary for efficient RNA polymerase transcription elongation past template-encoded arresting sites. The arresting sites in DNA have the property of trapping a certain fraction of elongating RNA polymerases that pass through, resulting in locked ternary complexes. Cleavage of the nascent transcript by cleavage factors such as GreA or GreB allows the resumption of elongation from the new 3'terminus. GreA releases sequences of 2 to 3 nucleotides. The sequence is that of Transcription elongation factor GreA from Clostridium novyi (strain NT).